Reading from the N-terminus, the 191-residue chain is Pyridoxal 5'-phosphate synthase subunit PdxT (191 aa).

46 to 48 provides a ligand contact to L-glutamine; sequence GES. Cys-78 acts as the Nucleophile in catalysis. L-glutamine-binding positions include Arg-105 and 133 to 134; that span reads IR. Residues His-169 and Glu-171 each act as charge relay system in the active site.

The protein belongs to the glutaminase PdxT/SNO family. In the presence of PdxS, forms a dodecamer of heterodimers. Only shows activity in the heterodimer.

The catalysed reaction is aldehydo-D-ribose 5-phosphate + D-glyceraldehyde 3-phosphate + L-glutamine = pyridoxal 5'-phosphate + L-glutamate + phosphate + 3 H2O + H(+). The enzyme catalyses L-glutamine + H2O = L-glutamate + NH4(+). Its pathway is cofactor biosynthesis; pyridoxal 5'-phosphate biosynthesis. Functionally, catalyzes the hydrolysis of glutamine to glutamate and ammonia as part of the biosynthesis of pyridoxal 5'-phosphate. The resulting ammonia molecule is channeled to the active site of PdxS. This chain is Pyridoxal 5'-phosphate synthase subunit PdxT, found in Fervidobacterium nodosum (strain ATCC 35602 / DSM 5306 / Rt17-B1).